The following is a 399-amino-acid chain: tRNA-specific 2-thiouridylase MnmA (399 aa).

Residues 7-14 (AMSGGVDS) and M33 each bind ATP. C128 functions as the Nucleophile in the catalytic mechanism. Cysteines 128 and 224 form a disulfide. G152 serves as a coordination point for ATP. The interval 174-176 (KDQ) is interaction with tRNA. C224 (cysteine persulfide intermediate) is an active-site residue. The segment at 333–334 (RY) is interaction with tRNA.

This sequence belongs to the MnmA/TRMU family.

The protein resides in the cytoplasm. The catalysed reaction is S-sulfanyl-L-cysteinyl-[protein] + uridine(34) in tRNA + AH2 + ATP = 2-thiouridine(34) in tRNA + L-cysteinyl-[protein] + A + AMP + diphosphate + H(+). In terms of biological role, catalyzes the 2-thiolation of uridine at the wobble position (U34) of tRNA, leading to the formation of s(2)U34. In Rhodopirellula baltica (strain DSM 10527 / NCIMB 13988 / SH1), this protein is tRNA-specific 2-thiouridylase MnmA.